The chain runs to 544 residues: Serine/threonine-protein kinase bur1 (544 aa).

The Protein kinase domain maps to 25–326 (FEFLGKLGEG…AIDALKHPYF (302 aa)). Residues 31-39 (LGEGTFGEV) and Lys-54 each bind ATP. Asp-155 (proton acceptor) is an active-site residue. Residues 357–544 (AAMPPAPAGG…ERVDRGPYRR (188 aa)) form a disordered region. Positions 374 to 403 (GGWSTNSGSRTGAETRNPRISSAARSQGNQ) are enriched in polar residues. Composition is skewed to basic and acidic residues over residues 419 to 438 (RGNE…HRDG), 456 to 466 (HSDKTGRDRGY), 488 to 511 (DRNR…DKSH), and 532 to 544 (NYRE…PYRR).

The protein belongs to the protein kinase superfamily. CMGC Ser/Thr protein kinase family. CDC2/CDKX subfamily.

It is found in the nucleus. It catalyses the reaction L-seryl-[protein] + ATP = O-phospho-L-seryl-[protein] + ADP + H(+). The catalysed reaction is L-threonyl-[protein] + ATP = O-phospho-L-threonyl-[protein] + ADP + H(+). It carries out the reaction [DNA-directed RNA polymerase] + ATP = phospho-[DNA-directed RNA polymerase] + ADP + H(+). Functionally, serine/threonine-protein kinase involved in transcription regulation. Phosphorylates the UBC2/RAD6 ubiquitin-conjugating enzyme (E2), leading to monoubiquitination of histone H2B and the silencing of telomeric-associated genes. Also required for histone H3 methylation. Necessary for the recovery from pheromone-induced growth arrest in the cell cycle G1 phase. The protein is Serine/threonine-protein kinase bur1 (ptkA) of Emericella nidulans (strain FGSC A4 / ATCC 38163 / CBS 112.46 / NRRL 194 / M139) (Aspergillus nidulans).